The primary structure comprises 244 residues: Cell division protein ZapD (244 aa).

It belongs to the ZapD family. In terms of assembly, interacts with FtsZ.

The protein resides in the cytoplasm. In terms of biological role, cell division factor that enhances FtsZ-ring assembly. Directly interacts with FtsZ and promotes bundling of FtsZ protofilaments, with a reduction in FtsZ GTPase activity. This Shewanella baltica (strain OS185) protein is Cell division protein ZapD.